A 141-amino-acid polypeptide reads, in one-letter code: ATP synthase epsilon chain (141 aa).

The protein belongs to the ATPase epsilon chain family. F-type ATPases have 2 components, CF(1) - the catalytic core - and CF(0) - the membrane proton channel. CF(1) has five subunits: alpha(3), beta(3), gamma(1), delta(1), epsilon(1). CF(0) has three main subunits: a, b and c.

Its subcellular location is the cell inner membrane. Its function is as follows. Produces ATP from ADP in the presence of a proton gradient across the membrane. In Acidithiobacillus ferridurans, this protein is ATP synthase epsilon chain (atpC).